Reading from the N-terminus, the 187-residue chain is ECF RNA polymerase sigma factor SigW (187 aa).

The tract at residues 3–95 (MMIKKRIKQV…RKKKPDYYLD (93 aa)) is sigma-70 factor domain-2. Positions 47–50 (DIAQ) match the Polymerase core binding motif. The tract at residues 125–187 (ELSNTIQQKI…EALRKQLRDL (63 aa)) is sigma-70 factor domain-4. Positions 166 to 184 (VGTVKTRIHRGREALRKQL) form a DNA-binding region, H-T-H motif.

It belongs to the sigma-70 factor family. ECF subfamily. As to quaternary structure, interacts transiently with the RNA polymerase catalytic core formed by RpoA, RpoB, RpoC and RpoZ (2 alpha, 1 beta, 1 beta' and 1 omega subunit) to form the RNA polymerase holoenzyme that can initiate transcription. Forms a heterodimer with cognate anti-sigma factor RsiW, which prevents it from binding to the -10 and -35 promoter elements.

With respect to regulation, extracytoplasmic function (ECF) sigma factors are held in an inactive form by a cognate anti-sigma factor (RsiW for this protein) until released by regulated membrane proteolysis (RIP). RIP occurs when an extracytoplasmic signal (envelope stress) triggers a concerted proteolytic cascade to transmit information and elicit cellular responses. The anti-sigma factor RsiW is a membrane protein, binding sigma-W in the cytoplasm. RsiW is first cut extracytoplasmically (site-1 protease, S1P, by PrsW), then within the membrane itself (site-2 protease, S2P, by RasP), while cytoplasmic proteases (predominantly ClpX-ClpP) finish degrading the regulatory protein, liberating sigma-W. Functionally, sigma factors are initiation factors that promote the attachment of RNA polymerase (RNAP) to specific initiation sites and are then released. Sigma-W controls genes involved in response to cell envelope stress such as antimicrobial peptides, alkaline pH, transport processes and detoxification. In Bacillus subtilis (strain 168), this protein is ECF RNA polymerase sigma factor SigW (sigW).